A 277-amino-acid chain; its full sequence is Endochitinase CHI (277 aa).

Positions 1-31 (MAKPTSRNDRFALFFITLIFLILTVSKPVAS) are cleaved as a signal peptide. Positions 32–66 (QNCGCASDFCCSKYGYCGTTDEFCGEGCQAGPCRS) constitute a Chitin-binding type-1 domain. 4 disulfides stabilise this stretch: C34–C42, C36–C48, C41–C55, and C59–C64. Positions 75–277 (VSLEGTVTPD…GVAPGDNLTC (203 aa)) are catalytic. E136 serves as the catalytic Proton donor. A glycan (N-linked (GlcNAc...) asparagine) is linked at N274.

This sequence belongs to the glycosyl hydrolase 19 family. Chitinase class I subfamily.

The catalysed reaction is Random endo-hydrolysis of N-acetyl-beta-D-glucosaminide (1-&gt;4)-beta-linkages in chitin and chitodextrins.. This Arabidopsis thaliana (Mouse-ear cress) protein is Endochitinase CHI.